We begin with the raw amino-acid sequence, 284 residues long: Glutamate 5-kinase 2 (284 aa).

Lys-26 contacts ATP. Substrate contacts are provided by Ser-67, Asp-154, and Asn-166. ATP is bound by residues 186–187 and 228–234; these read SD and SGGMVTK.

The protein belongs to the glutamate 5-kinase family.

The protein localises to the cytoplasm. It catalyses the reaction L-glutamate + ATP = L-glutamyl 5-phosphate + ADP. It functions in the pathway amino-acid biosynthesis; L-proline biosynthesis; L-glutamate 5-semialdehyde from L-glutamate: step 1/2. Functionally, catalyzes the transfer of a phosphate group to glutamate to form L-glutamate 5-phosphate. The sequence is that of Glutamate 5-kinase 2 from Mesorhizobium japonicum (strain LMG 29417 / CECT 9101 / MAFF 303099) (Mesorhizobium loti (strain MAFF 303099)).